A 382-amino-acid polypeptide reads, in one-letter code: 8-amino-7-oxononanoate synthase (382 aa).

Substrate-binding residues include R21 and H131. Pyridoxal 5'-phosphate contacts are provided by S178, H206, and T232. At K235 the chain carries N6-(pyridoxal phosphate)lysine. Residue T349 participates in substrate binding.

The protein belongs to the class-II pyridoxal-phosphate-dependent aminotransferase family. BioF subfamily. As to quaternary structure, homodimer. Pyridoxal 5'-phosphate serves as cofactor.

It catalyses the reaction 6-carboxyhexanoyl-[ACP] + L-alanine + H(+) = (8S)-8-amino-7-oxononanoate + holo-[ACP] + CO2. It participates in cofactor biosynthesis; biotin biosynthesis. Its function is as follows. Catalyzes the decarboxylative condensation of pimeloyl-[acyl-carrier protein] and L-alanine to produce 8-amino-7-oxononanoate (AON), [acyl-carrier protein], and carbon dioxide. The sequence is that of 8-amino-7-oxononanoate synthase from Serratia marcescens.